The chain runs to 460 residues: Endoglucanase 2 (460 aa).

Positions 1 to 32 (MIKGSSLKRIKSLVMMAIFSVSIITTAIVSSA) are cleaved as a signal peptide. The Proton donor role is filled by Glu99. Asp155 functions as the Nucleophile in the catalytic mechanism. The 61-residue stretch at 400–460 (QQGLKGDVNN…FAQLKVKLLN (61 aa)) folds into the Dockerin domain.

It belongs to the glycosyl hydrolase 8 (cellulase D) family.

It carries out the reaction Endohydrolysis of (1-&gt;4)-beta-D-glucosidic linkages in cellulose, lichenin and cereal beta-D-glucans.. The protein is Endoglucanase 2 (celB) of Ruminiclostridium josui (Clostridium josui).